The following is a 61-amino-acid chain: Small ribosomal subunit protein uS14 (61 aa).

4 residues coordinate Zn(2+): Cys24, Cys27, Cys40, and Cys43.

It belongs to the universal ribosomal protein uS14 family. Zinc-binding uS14 subfamily. Part of the 30S ribosomal subunit. Contacts proteins S3 and S10. The cofactor is Zn(2+).

Its function is as follows. Binds 16S rRNA, required for the assembly of 30S particles and may also be responsible for determining the conformation of the 16S rRNA at the A site. This Clostridium botulinum (strain ATCC 19397 / Type A) protein is Small ribosomal subunit protein uS14.